Consider the following 248-residue polypeptide: MKNIATGDVLERIRRLAPSHVTAPFKTVAEWREWQLSEGQKRCEEINRQNRQLRVEKILNRSGIQPLHRKCSFSNYQVQNEGQRYALSQAKSIADELMTGCTNFAFSGKPGTGKNHLAAAIGNRLLKDGQTVIVVTVADVMSALHASYDDGQSGEKFLRELCEVDLLVLDEIGIQRETKNEQVVLHQIVDRRTASMRSVGMLTNLNYEAMKTLLGERIMDRMTMNGGRWVNFNWESWRPNVVQPGIAK.

Positions 33-57 form a coiled coil; that stretch reads EWQLSEGQKRCEEINRQNRQLRVEK.

This is an uncharacterized protein from Escherichia coli (strain K12).